Reading from the N-terminus, the 693-residue chain is Periplasmic alpha-galactoside-binding protein (693 aa).

Positions Met1–Ala20 are cleaved as a signal peptide.

It belongs to the bacterial solute-binding protein 5 family.

Its subcellular location is the periplasm. Involved in the transport of alpha-galactosides. Required for the utilization of raffinose and melibiose. Probably acts as a periplasmic substrate-binding protein for a transport system. This chain is Periplasmic alpha-galactoside-binding protein, found in Rhizobium meliloti (strain 1021) (Ensifer meliloti).